Consider the following 164-residue polypeptide: MTDTQVTWLTQESHDRLKAELDQLIANRPVIAAEINERREEGDLRENGGYHAAREEQGQQEARIRQLQELLNNAKVGEAPTQSGVALPGSVVKVYYDGDKGDTETFLIATRQEGVKDGKLEVYSPSSPLGGALIDAKVGETRSYTVPNGTEVQVTLVSAEPYHE.

Positions 50–76 (YHAAREEQGQQEARIRQLQELLNNAKV) form a coiled coil.

The protein belongs to the GreA/GreB family.

In terms of biological role, necessary for efficient RNA polymerase transcription elongation past template-encoded arresting sites. The arresting sites in DNA have the property of trapping a certain fraction of elongating RNA polymerases that pass through, resulting in locked ternary complexes. Cleavage of the nascent transcript by cleavage factors such as GreA or GreB allows the resumption of elongation from the new 3'terminus. GreA releases sequences of 2 to 3 nucleotides. The protein is Transcription elongation factor GreA of Mycobacteroides abscessus (strain ATCC 19977 / DSM 44196 / CCUG 20993 / CIP 104536 / JCM 13569 / NCTC 13031 / TMC 1543 / L948) (Mycobacterium abscessus).